The chain runs to 1333 residues: Vascular endothelial growth factor receptor 1 (1333 aa).

The first 22 residues, M1–G22, serve as a signal peptide directing secretion. Residues Y23–E759 lie on the Extracellular side of the membrane. 7 Ig-like C2-type domains span residues P32–S124, G152–H215, L231–H328, F334–P429, Q430–K550, P557–V656, and P662–T748. 2 disulfides stabilise this stretch: C53-C108 and C159-C208. N101, N165, N197, and N252 each carry an N-linked (GlcNAc...) asparagine glycan. A disulfide bridge connects residues C253 and C312. 8 N-linked (GlcNAc...) asparagine glycosylation sites follow: N324, N418, N475, N517, N598, N626, N667, and N714. 2 disulfide bridges follow: C455–C536 and C578–C637. Cysteines 683 and 732 form a disulfide. A helical membrane pass occupies residues L760–I781. Residues R782–A1333 are Cytoplasmic-facing. Positions L828–L1158 constitute a Protein kinase domain. Residues L834–V842 and K862 contribute to the ATP site. Y915 is modified (phosphotyrosine; by autocatalysis). Residues E947–D983 form a disordered region. Over residues S960 to S970 the composition is skewed to low complexity. D1022 serves as the catalytic Proton acceptor. Residues Y1053, Y1169, Y1213, Y1242, Y1322, and Y1328 each carry the phosphotyrosine; by autocatalysis modification.

The protein belongs to the protein kinase superfamily. Tyr protein kinase family. CSF-1/PDGF receptor subfamily. In terms of assembly, interacts with VEGFA, VEGFB and PGF. Monomer in the absence of bound VEGFA, VEGFB or PGF. Homodimer in the presence of bound VEGFA, VEGFB and PGF. Can also form a heterodimer with KDR. Interacts (tyrosine phosphorylated) with CBL, CRK, GRB2, NCK1, PIK3R1, PLCG, PSEN1 and PTPN11. Probably interacts with PTPRB. Interacts with RACK1. Identified in a complex with CBL and CD2AP. Post-translationally, N-glycosylated. Ubiquitinated after VEGFA-mediated autophosphorylation, leading to proteolytic degradation. In terms of processing, autophosphorylated on tyrosine residues upon ligand binding. Autophosphorylation occurs in trans, i.e. one subunit of the dimeric receptor phosphorylates tyrosine residues on the other subunit. Phosphorylation at Tyr-1169 is important for interaction with PLCG. Phosphorylation at Tyr-1213 is important for interaction with PIK3R1, PTPN11, GRB2, and PLCG. Phosphorylation at Tyr-1328 is important for endocytosis and for interaction with CBL, NCK1 and CRK. Is probably dephosphorylated by PTPRB.

The protein localises to the cell membrane. The protein resides in the endosome. It carries out the reaction L-tyrosyl-[protein] + ATP = O-phospho-L-tyrosyl-[protein] + ADP + H(+). Its activity is regulated as follows. Present in an inactive conformation in the absence of bound ligand. Binding of VEGFA, VEGFB or PGF leads to dimerization and activation by autophosphorylation on tyrosine residues. Functionally, tyrosine-protein kinase that acts as a cell-surface receptor for VEGFA, VEGFB and PGF, and plays an essential role in the development of embryonic vasculature, the regulation of angiogenesis, cell survival, cell migration, macrophage function, chemotaxis, and cancer cell invasion. Acts as a positive regulator of postnatal retinal hyaloid vessel regression. May play an essential role as a negative regulator of embryonic angiogenesis by inhibiting excessive proliferation of endothelial cells. Can promote endothelial cell proliferation, survival and angiogenesis in adulthood. Its function in promoting cell proliferation seems to be cell-type specific. Promotes PGF-mediated proliferation of endothelial cells, and proliferation of some types of cancer cells, but does not promote proliferation of normal fibroblasts. Has very high affinity for VEGFA and relatively low protein kinase activity; may function as a negative regulator of VEGFA signaling by limiting the amount of free VEGFA and preventing its binding to KDR. Modulates KDR signaling by forming heterodimers with KDR. Ligand binding leads to the activation of several signaling cascades. Activation of PLCG leads to the production of the cellular signaling molecules diacylglycerol and inositol 1,4,5-trisphosphate and the activation of protein kinase C. Mediates phosphorylation of PIK3R1, the regulatory subunit of phosphatidylinositol 3-kinase, leading to the activation of phosphatidylinositol kinase and the downstream signaling pathway. Mediates activation of MAPK1/ERK2, MAPK3/ERK1 and the MAP kinase signaling pathway, as well as of the AKT1 signaling pathway. Phosphorylates SRC, YES1 and PLCG, and may also phosphorylate CBL. Promotes phosphorylation of AKT1 and PTK2/FAK1. The chain is Vascular endothelial growth factor receptor 1 (Flt1) from Mus musculus (Mouse).